The sequence spans 151 residues: Ubiquitin-conjugating enzyme E2 2 (151 aa).

Positions 1–26 (MSTSARRRLMRDFKRMQTDPPAGVSA) are disordered. The UBC core domain occupies 4–150 (SARRRLMRDF…VRETVEKSWE (147 aa)). The Glycyl thioester intermediate role is filled by Cys88.

Belongs to the ubiquitin-conjugating enzyme family.

It localises to the cytoplasm. It is found in the nucleus. It carries out the reaction S-ubiquitinyl-[E1 ubiquitin-activating enzyme]-L-cysteine + [E2 ubiquitin-conjugating enzyme]-L-cysteine = [E1 ubiquitin-activating enzyme]-L-cysteine + S-ubiquitinyl-[E2 ubiquitin-conjugating enzyme]-L-cysteine.. It participates in protein modification; protein ubiquitination. In terms of biological role, catalyzes the covalent attachment of ubiquitin to other proteins. Plays a role in transcription regulation by catalyzing the monoubiquitination of histone H2B to form H2BK123ub1. H2BK123ub1 gives a specific tag for epigenetic transcriptional activation and is also a prerequisite for H3K4me and H3K79me formation. Also involved in postreplication repair of UV-damaged DNA, in N-end rule-dependent protein degradation and in sporulation. In Aspergillus fumigatus (strain ATCC MYA-4609 / CBS 101355 / FGSC A1100 / Af293) (Neosartorya fumigata), this protein is Ubiquitin-conjugating enzyme E2 2 (ubc2).